Consider the following 460-residue polypeptide: Exodeoxyribonuclease 7 large subunit (460 aa).

Belongs to the XseA family. In terms of assembly, heterooligomer composed of large and small subunits.

It localises to the cytoplasm. The enzyme catalyses Exonucleolytic cleavage in either 5'- to 3'- or 3'- to 5'-direction to yield nucleoside 5'-phosphates.. Bidirectionally degrades single-stranded DNA into large acid-insoluble oligonucleotides, which are then degraded further into small acid-soluble oligonucleotides. The polypeptide is Exodeoxyribonuclease 7 large subunit (Edwardsiella ictaluri (strain 93-146)).